A 352-amino-acid chain; its full sequence is Photosystem II D2 protein 2 (352 aa).

A helical transmembrane segment spans residues 40–60 (CAYLALGGWLTGTSFVTSWYT). His-117 contacts chlorophyll a. A helical membrane pass occupies residues 124 to 140 (GFMLRQFEIARLVGVRP). 2 residues coordinate pheophytin a: Gln-129 and Asn-142. Residues 152–165 (VFVSVFLMYPLGQS) traverse the membrane as a helical segment. His-197 provides a ligand contact to chlorophyll a. A helical transmembrane segment spans residues 207–227 (GALLCAIHGATVENTLFEDSE). 2 residues coordinate a plastoquinone: His-214 and Phe-261. His-214 contacts Fe cation. His-268 serves as a coordination point for Fe cation. Residues 278-294 (GLWMSSIGIVGLALNLR) traverse the membrane as a helical segment.

This sequence belongs to the reaction center PufL/M/PsbA/D family. As to quaternary structure, PSII is composed of 1 copy each of membrane proteins PsbA, PsbB, PsbC, PsbD, PsbE, PsbF, PsbH, PsbI, PsbJ, PsbK, PsbL, PsbM, PsbT, PsbX, PsbY, PsbZ, Psb30/Ycf12, peripheral proteins PsbO, CyanoQ (PsbQ), PsbU, PsbV and a large number of cofactors. It forms dimeric complexes. The cofactor is The D1/D2 heterodimer binds P680, chlorophylls that are the primary electron donor of PSII, and subsequent electron acceptors. It shares a non-heme iron and each subunit binds pheophytin, quinone, additional chlorophylls, carotenoids and lipids. There is also a Cl(-1) ion associated with D1 and D2, which is required for oxygen evolution. The PSII complex binds additional chlorophylls, carotenoids and specific lipids..

The protein resides in the cellular thylakoid membrane. The enzyme catalyses 2 a plastoquinone + 4 hnu + 2 H2O = 2 a plastoquinol + O2. In terms of biological role, photosystem II (PSII) is a light-driven water:plastoquinone oxidoreductase that uses light energy to abstract electrons from H(2)O, generating O(2) and a proton gradient subsequently used for ATP formation. It consists of a core antenna complex that captures photons, and an electron transfer chain that converts photonic excitation into a charge separation. The D1/D2 (PsbA/PsbD) reaction center heterodimer binds P680, the primary electron donor of PSII as well as several subsequent electron acceptors. D2 is needed for assembly of a stable PSII complex. In Synechococcus sp. (strain ATCC 27144 / PCC 6301 / SAUG 1402/1) (Anacystis nidulans), this protein is Photosystem II D2 protein 2.